A 625-amino-acid chain; its full sequence is Chaperone protein HtpG (625 aa).

The tract at residues 1–341 is a; substrate-binding; it reads MGKRKFKAES…SEDLSLNISR (341 aa). Residues 342-551 are b; that stretch reads EMLQHDRQLK…DGEISLEMEK (210 aa). A c region spans residues 552-625; sequence IINAMPDDQQ…FTNDICKVMV (74 aa).

It belongs to the heat shock protein 90 family. Homodimer.

Its subcellular location is the cytoplasm. Functionally, molecular chaperone. Has ATPase activity. The sequence is that of Chaperone protein HtpG from Oceanobacillus iheyensis (strain DSM 14371 / CIP 107618 / JCM 11309 / KCTC 3954 / HTE831).